The chain runs to 330 residues: Autoinducer 2 import system permease protein LsrD (330 aa).

Over 1–4 the chain is Cytoplasmic; it reads MRIR. A helical transmembrane segment spans residues 5–25; it reads YGWELALAALLVIEIVSFGAI. Over 26–42 the chain is Periplasmic; it reads NPRMLDLNMLLFSTSDF. Residues 43–63 traverse the membrane as a helical segment; sequence ICIGIVALPLTMVIVSGGIDI. At 64-67 the chain is on the cytoplasmic side; the sequence is SFGS. A run of 2 helical transmembrane segments spans residues 68–88 and 89–109; these read TIGL…PMPL and AILL…GLII. The Cytoplasmic portion of the chain corresponds to 110-115; sequence YTKVNP. The helical transmembrane segment at 116–136 threads the bilayer; the sequence is LVITLGTLYLFAGSALLLSGM. The Periplasmic segment spans residues 137 to 159; that stretch reads AGATGYEGIGGFPMAFTDFANLD. The chain crosses the membrane as a helical span at residues 160-180; it reads VLGLPVPLIIFLICLLVFWLW. The Cytoplasmic segment spans residues 181–209; that stretch reads LHKTHAGRNVFLIGQSPRVALYSAIPVNR. A helical transmembrane segment spans residues 210 to 230; it reads TLCALYAMTGLASAVAAVLLV. At 231-237 the chain is on the periplasmic side; the sequence is SYFGSAR. A run of 2 helical transmembrane segments spans residues 238–258 and 259–279; these read SDLG…GGAN and IYGG…VGYL. The Periplasmic segment spans residues 280-285; the sequence is QQGLQM. The chain crosses the membrane as a helical span at residues 286 to 306; it reads AGVPNQVSSALSGALLIVVVV. The Cytoplasmic segment spans residues 307 to 330; that stretch reads GRSVSLHRQQIKEWLARRANNPLP.

Belongs to the binding-protein-dependent transport system permease family. AraH/RbsC subfamily. In terms of assembly, the complex is composed of two ATP-binding proteins (LsrA), two transmembrane proteins (LsrC and LsrD) and a solute-binding protein (LsrB).

The protein localises to the cell inner membrane. Part of the ABC transporter complex LsrABCD involved in autoinducer 2 (AI-2) import. Probably responsible for the translocation of the substrate across the membrane. This is Autoinducer 2 import system permease protein LsrD (lsrD) from Escherichia coli O157:H7.